Reading from the N-terminus, the 451-residue chain is Gamma-aminobutyric acid receptor subunit alpha-2 (451 aa).

An N-terminal signal peptide occupies residues 1 to 28 (MKTKLNSSNMQLLLFVFLAWDPARLVLA). At 29–249 (NIQEDEAKNN…MTAHFHLKRK (221 aa)) the chain is on the extracellular side. A glycan (N-linked (GlcNAc...) asparagine) is linked at asparagine 38. Arginine 94 is a 4-aminobutanoate binding site. Asparagine 138 is a glycosylation site (N-linked (GlcNAc...) asparagine). Threonine 157 lines the 4-aminobutanoate pocket. A disulfide bond links cysteine 166 and cysteine 180. N-linked (GlcNAc...) asparagine glycosylation occurs at asparagine 201. Residues 250-270 (IGYFVIQTYLPCIMTVILSQV) traverse the membrane as a helical segment. Over 271-280 (SFWLNRESVP) the chain is Cytoplasmic. Residues 281–300 (ARTVFGVTTVLTMTTLSISA) traverse the membrane as a helical segment. Topologically, residues 301 to 311 (RNSLPKVAYAT) are extracellular. The helical transmembrane segment at 312 to 332 (AMDWFIAVCYAFVFSALIEFA) threads the bilayer. At 333-420 (TVNYFTKRGW…FNSVSKIDRM (88 aa)) the chain is on the cytoplasmic side. Residues 421-441 (SRIVFPVLFGTFNLVYWATYL) traverse the membrane as a helical segment. At 442-451 (NREPVLGVSP) the chain is on the extracellular side.

It belongs to the ligand-gated ion channel (TC 1.A.9) family. Gamma-aminobutyric acid receptor (TC 1.A.9.5) subfamily. GABRA2 sub-subfamily. In terms of assembly, heteropentamer, formed by a combination of alpha (GABRA1-6), beta (GABRB1-3), gamma (GABRG1-3), delta (GABRD), epsilon (GABRE), rho (GABRR1-3), pi (GABRP) and theta (GABRQ) subunits, each subunit exhibiting distinct physiological and pharmacological properties. Interacts with UBQLN1. Interacts with KIF21B. Interacts with LHFPL4. Interacts with SHISA7; interaction leads to the regulation of GABA(A) receptor trafficking, channel deactivation kinetics and pharmacology. Glycosylated.

It localises to the postsynaptic cell membrane. The protein resides in the cell membrane. It is found in the cytoplasmic vesicle membrane. Its subcellular location is the cell projection. The protein localises to the dendrite. The enzyme catalyses chloride(in) = chloride(out). Activated by pentobarbital. Inhibited by the antagonist bicuculline. Its function is as follows. Alpha subunit of the heteropentameric ligand-gated chloride channel gated by gamma-aminobutyric acid (GABA), a major inhibitory neurotransmitter in the brain. GABA-gated chloride channels, also named GABA(A) receptors (GABAAR), consist of five subunits arranged around a central pore and contain GABA active binding site(s) located at the alpha and beta subunit interface(s). When activated by GABA, GABAARs selectively allow the flow of chloride anions across the cell membrane down their electrochemical gradient. Chloride influx into the postsynaptic neuron following GABAAR opening decreases the neuron ability to generate a new action potential, thereby reducing nerve transmission. The alpha-2 subunit exhibits synaptogenic activity together with beta-2 and very little to no activity together with beta-3, the gamma-2 subunit being necessary but not sufficient to induce rapid synaptic contacts formation. This chain is Gamma-aminobutyric acid receptor subunit alpha-2 (GABRA2), found in Bos taurus (Bovine).